Consider the following 410-residue polypeptide: Argininosuccinate synthase (410 aa).

ATP-binding positions include 10–18 (AYSGGLDTS) and Ala37. The L-citrulline site is built by Tyr90 and Ser95. ATP is bound at residue Gly120. Positions 122, 126, and 127 each coordinate L-aspartate. Position 126 (Asn126) interacts with L-citrulline. Arg130, Ser182, Ser191, Glu267, and Tyr279 together coordinate L-citrulline.

This sequence belongs to the argininosuccinate synthase family. Type 1 subfamily. As to quaternary structure, homotetramer.

The protein localises to the cytoplasm. The enzyme catalyses L-citrulline + L-aspartate + ATP = 2-(N(omega)-L-arginino)succinate + AMP + diphosphate + H(+). It participates in amino-acid biosynthesis; L-arginine biosynthesis; L-arginine from L-ornithine and carbamoyl phosphate: step 2/3. The polypeptide is Argininosuccinate synthase (Polynucleobacter necessarius subsp. necessarius (strain STIR1)).